The sequence spans 426 residues: Kelch repeat-containing protein At3g27220 (426 aa).

Residues 18–38 (LMLVLYFTSVLGIGFIAAFLC) traverse the membrane as a helical segment. Kelch repeat units follow at residues 123-170 (LLYV…IVTD), 173-222 (YVYV…IWRG), 224-275 (LHVM…VAND), 276-338 (KLLV…WIIV), and 341-394 (SIVI…FWNG).

Its subcellular location is the membrane. The chain is Kelch repeat-containing protein At3g27220 from Arabidopsis thaliana (Mouse-ear cress).